A 201-amino-acid chain; its full sequence is Peptide deformylase (201 aa).

Positions 1 to 21 (MANHFSQLAKKSRTNGNAEKI) are disordered. Fe cation contacts are provided by C121 and H163. E164 is an active-site residue. Residue H167 participates in Fe cation binding.

This sequence belongs to the polypeptide deformylase family. Fe(2+) serves as cofactor.

The catalysed reaction is N-terminal N-formyl-L-methionyl-[peptide] + H2O = N-terminal L-methionyl-[peptide] + formate. In terms of biological role, removes the formyl group from the N-terminal Met of newly synthesized proteins. Requires at least a dipeptide for an efficient rate of reaction. N-terminal L-methionine is a prerequisite for activity but the enzyme has broad specificity at other positions. This chain is Peptide deformylase, found in Prochlorococcus marinus (strain AS9601).